The primary structure comprises 295 residues: Deleted in azoospermia-like (295 aa).

A compositionally biased stretch (polar residues) spans 1 to 10 (MSAANPETPN). Residues 1–25 (MSAANPETPNSTISREASTQSSSAA) form a disordered region. Residues 11–25 (STISREASTQSSSAA) show a composition bias toward low complexity. Residues 40–115 (NTVFVGGIDV…KKLKLGPAIR (76 aa)) enclose the RRM domain. Residues 80-132 (KGYGFVSFFNDVDVQKIVESQINFHGKKLKLGPAIRKQNLCAYHVQPRPLVFN) are homodimerization. The 24-residue stretch at 167–190 (AYPTYPNSPVQVITGYQLPVYNYQ) folds into the DAZ domain. Tyr276 carries the post-translational modification Phosphotyrosine.

Belongs to the RRM DAZ family. As to quaternary structure, homodimer and heterodimer. Forms a heterodimer with DAZ. Interacts with BOLL, DAZAP1 and DAZAP2. Interacts with PUM2 Multiple DAZL RRMs can bind to a single RNA containing multiple GUU triplets. As to expression, testis specific.

Its subcellular location is the cytoplasm. The protein localises to the nucleus. Functionally, RNA-binding protein, which is essential for gametogenesis in both males and females. Plays a central role during spermatogenesis. Acts by binding to the 3'-UTR of mRNA, specifically recognizing GUU triplets, and thereby regulating the translation of key transcripts. The protein is Deleted in azoospermia-like (DAZL) of Macaca fascicularis (Crab-eating macaque).